Here is a 342-residue protein sequence, read N- to C-terminus: S-adenosylmethionine:tRNA ribosyltransferase-isomerase (342 aa).

Belongs to the QueA family. As to quaternary structure, monomer.

Its subcellular location is the cytoplasm. It catalyses the reaction 7-aminomethyl-7-carbaguanosine(34) in tRNA + S-adenosyl-L-methionine = epoxyqueuosine(34) in tRNA + adenine + L-methionine + 2 H(+). The protein operates within tRNA modification; tRNA-queuosine biosynthesis. Transfers and isomerizes the ribose moiety from AdoMet to the 7-aminomethyl group of 7-deazaguanine (preQ1-tRNA) to give epoxyqueuosine (oQ-tRNA). In Streptococcus pneumoniae serotype 19F (strain G54), this protein is S-adenosylmethionine:tRNA ribosyltransferase-isomerase.